Consider the following 610-residue polypeptide: UvrABC system protein C (610 aa).

The 79-residue stretch at 16–94 folds into the GIY-YIG domain; sequence SQPGVYRMYD…IQRYQPRYNV (79 aa). The 36-residue stretch at 204–239 folds into the UVR domain; it reads SQVIEGLIKRMEEASQALRFEEAARIRDQIHAVRQV.

The protein belongs to the UvrC family. As to quaternary structure, interacts with UvrB in an incision complex.

Its subcellular location is the cytoplasm. Functionally, the UvrABC repair system catalyzes the recognition and processing of DNA lesions. UvrC both incises the 5' and 3' sides of the lesion. The N-terminal half is responsible for the 3' incision and the C-terminal half is responsible for the 5' incision. In Proteus mirabilis (strain HI4320), this protein is UvrABC system protein C.